Consider the following 1083-residue polypeptide: Centrosomal protein of 131 kDa (1083 aa).

Disordered regions lie at residues 1–155 and 220–258; these read MKGT…AGPR and GSESSGFGKLPKNVSSATHSARNNTGGSTGLPRRKEVTE. The segment at 1 to 250 is interaction with PLK4; sequence MKGTRAIGSV…RNNTGGSTGL (250 aa). A phosphoserine mark is found at serine 14 and serine 35. The residue at position 47 (serine 47) is a Phosphoserine; by MAPKAPK2. Polar residues predominate over residues 68–87; that stretch reads QAINNLRRSNSTTQVSQPRS. At serine 78 the chain carries Phosphoserine; by MAPKAPK2 and PLK4. Phosphoserine is present on residues serine 89, serine 105, serine 114, serine 146, and serine 150. Over residues 138 to 148 the composition is skewed to polar residues; that stretch reads LPSNARSSSAL. A compositionally biased stretch (polar residues) spans 232 to 245; it reads NVSSATHSARNNTG. In terms of domain architecture, IQ spans 269–289; sequence NQATVTIQRWYRHQVQRRGAG. A disordered region spans residues 301 to 429; that stretch reads REEQRQRSGE…PQQPPEDRTQ (129 aa). Composition is skewed to basic and acidic residues over residues 317-333 and 360-369; these read HQQKEAARRKAREEKAR and GPPENPRETR. Serine 381 carries the phosphoserine modification. Threonine 383 is subject to Phosphothreonine. Phosphoserine occurs at positions 453, 489, 496, 499, 731, and 798. Basic and acidic residues predominate over residues 1047 to 1076; that stretch reads KEEAVSSLRTQHEAAVKRADHLEELLEQHR. The tract at residues 1047-1083 is disordered; that stretch reads KEEAVSSLRTQHEAAVKRADHLEELLEQHRRPTPSTK.

Belongs to the CEP131 family. Self-associates. Associates with the centriolar satellite BBSome protein complex. Interacts with BBS4; the interaction limits BBS4 availability for association with the BBSome complex, and hence negatively regulates ciliary localization of the BBSome complex. Interacts with MIB1. Interacts with PCM1; the interaction increases in response to ultraviolet light (UV) radiation. Associates with microtubules; association with microtubules is reduced in response to cellular stress, such as UV stimulation, in a process that requires p38 MAP kinase signaling. Interacts with CEP290, DCTN1, PCNT, PCM1 and CEP152. Interacts with 14-3-3 proteins following UV-induced phosphorylation by MAPKAPK2; this inhibits formation of novel centriolar satellites. Interacts with SDCCAG8. Interacts with CCDC61. Interacts with PLK4. Post-translationally, ubiquitinated. Undergoes monoubiquitination catalyzed by the E3 ubiquitin-protein ligase MIB1 in proliferating cells, preventing cilia formation. Monoubiquitination by MIB1 is inhibited in response to cellular stress, such as ultraviolet light (UV) radiation or heat shock, resulting in cilia formation initiation. MAPKAPK2-dependent phosphorylation at Ser-47 and Ser-78 occurs in response to cellular stress such as exposure to ultraviolet irradiation and promotes binding to 14-3-3 proteins which leads to cytoplasmic sequestration of CEP131 and blocks formation of new centriolar satellites. Phosphorylation at Ser-78 mediated by PLK4 is essential for proper organization and integrity of centriolar satellites but is dispensable for its localization to centrioles and its function in ciliogenesis.

The protein localises to the cytoplasm. The protein resides in the cytoskeleton. Its subcellular location is the microtubule organizing center. It localises to the centrosome. It is found in the centriolar satellite. The protein localises to the centriole. The protein resides in the cilium basal body. Its subcellular location is the cytoplasmic vesicle. It localises to the secretory vesicle. It is found in the acrosome. Its function is as follows. Component of centriolar satellites contributing to the building of a complex and dynamic network required to regulate cilia/flagellum formation. In proliferating cells, MIB1-mediated ubiquitination induces its sequestration within centriolar satellites, precluding untimely cilia formation initiation. In contrast, during normal and ultraviolet or heat shock cellular stress-induced ciliogenesis, its non-ubiquitinated form is rapidly displaced from centriolar satellites and recruited to centrosome/basal bodies in a microtubule- and p38 MAPK-dependent manner. Also acts as a negative regulator of BBSome ciliary trafficking. Plays a role in sperm flagellar formation; may be involved in the regulation of intraflagellar transport (IFT) and/or intramanchette (IMT) trafficking, which are important for axoneme extension and/or cargo delivery to the nascent sperm tail. Required for optimal cell proliferation and cell cycle progression; may play a role in the regulation of genome stability in non-ciliogenic cells. Involved in centriole duplication. Required for CEP152, WDR62 and CEP63 centrosomal localization and promotes the centrosomal localization of CDK2. Essential for maintaining proper centriolar satellite integrity. This Homo sapiens (Human) protein is Centrosomal protein of 131 kDa (CEP131).